The chain runs to 391 residues: Formate-dependent phosphoribosylglycinamide formyltransferase (391 aa).

N(1)-(5-phospho-beta-D-ribosyl)glycinamide contacts are provided by residues 20–21 and E80; that span reads EL. Residues R112, K153, 158–163, 193–196, and E201 contribute to the ATP site; these read SSGKGQ and EGFI. In terms of domain architecture, ATP-grasp spans 117-306; it reads RLAAETLGLP…EFALHVRAIL (190 aa). Mg(2+) is bound by residues E265 and E277. N(1)-(5-phospho-beta-D-ribosyl)glycinamide contacts are provided by residues D284, K354, and 361 to 362; that span reads RR.

The protein belongs to the PurK/PurT family. In terms of assembly, homodimer.

The catalysed reaction is N(1)-(5-phospho-beta-D-ribosyl)glycinamide + formate + ATP = N(2)-formyl-N(1)-(5-phospho-beta-D-ribosyl)glycinamide + ADP + phosphate + H(+). The protein operates within purine metabolism; IMP biosynthesis via de novo pathway; N(2)-formyl-N(1)-(5-phospho-D-ribosyl)glycinamide from N(1)-(5-phospho-D-ribosyl)glycinamide (formate route): step 1/1. Functionally, involved in the de novo purine biosynthesis. Catalyzes the transfer of formate to 5-phospho-ribosyl-glycinamide (GAR), producing 5-phospho-ribosyl-N-formylglycinamide (FGAR). Formate is provided by PurU via hydrolysis of 10-formyl-tetrahydrofolate. The protein is Formate-dependent phosphoribosylglycinamide formyltransferase of Shewanella sp. (strain MR-7).